A 230-amino-acid chain; its full sequence is Geranylgeranylglyceryl phosphate synthase (230 aa).

A sn-glycerol 1-phosphate-binding site is contributed by Lys13. Mg(2+) is bound by residues Asp15 and Thr41. Sn-glycerol 1-phosphate-binding positions include 161–166 (YIEYSG), Gly191, and 211–212 (GN).

The protein belongs to the GGGP/HepGP synthase family. Group I subfamily. The cofactor is Mg(2+).

Its subcellular location is the cytoplasm. The enzyme catalyses sn-glycerol 1-phosphate + (2E,6E,10E)-geranylgeranyl diphosphate = sn-3-O-(geranylgeranyl)glycerol 1-phosphate + diphosphate. It participates in membrane lipid metabolism; glycerophospholipid metabolism. In terms of biological role, prenyltransferase that catalyzes the transfer of the geranylgeranyl moiety of geranylgeranyl diphosphate (GGPP) to the C3 hydroxyl of sn-glycerol-1-phosphate (G1P). This reaction is the first ether-bond-formation step in the biosynthesis of archaeal membrane lipids. This is Geranylgeranylglyceryl phosphate synthase from Methanoculleus marisnigri (strain ATCC 35101 / DSM 1498 / JR1).